The primary structure comprises 180 residues: Large ribosomal subunit protein uL6 (180 aa).

It belongs to the universal ribosomal protein uL6 family. In terms of assembly, part of the 50S ribosomal subunit.

Functionally, this protein binds to the 23S rRNA, and is important in its secondary structure. It is located near the subunit interface in the base of the L7/L12 stalk, and near the tRNA binding site of the peptidyltransferase center. The protein is Large ribosomal subunit protein uL6 of Clostridium botulinum (strain Okra / Type B1).